A 185-amino-acid polypeptide reads, in one-letter code: ATP synthase subunit b (185 aa).

A helical transmembrane segment spans residues 28–48; that stretch reads VVLVGFAVLMYIVVKFVVPMF.

It belongs to the ATPase B chain family. F-type ATPases have 2 components, F(1) - the catalytic core - and F(0) - the membrane proton channel. F(1) has five subunits: alpha(3), beta(3), gamma(1), delta(1), epsilon(1). F(0) has three main subunits: a(1), b(2) and c(10-14). The alpha and beta chains form an alternating ring which encloses part of the gamma chain. F(1) is attached to F(0) by a central stalk formed by the gamma and epsilon chains, while a peripheral stalk is formed by the delta and b chains.

It localises to the cell membrane. Functionally, f(1)F(0) ATP synthase produces ATP from ADP in the presence of a proton or sodium gradient. F-type ATPases consist of two structural domains, F(1) containing the extramembraneous catalytic core and F(0) containing the membrane proton channel, linked together by a central stalk and a peripheral stalk. During catalysis, ATP synthesis in the catalytic domain of F(1) is coupled via a rotary mechanism of the central stalk subunits to proton translocation. Component of the F(0) channel, it forms part of the peripheral stalk, linking F(1) to F(0). This Paenarthrobacter aurescens (strain TC1) protein is ATP synthase subunit b.